Consider the following 170-residue polypeptide: Transcriptional repressor NrdR (170 aa).

The segment at 3-34 (CPFCRHPDSRVVDSRTTDDGTSIRRRRQCPDC) is a zinc-finger region. Residues 46 to 136 (LMVVKRSGVT…VYRAFDSLED (91 aa)) enclose the ATP-cone domain. The disordered stretch occupies residues 148–170 (RPSAEDRGSGETLEVPAPAIAAD).

It belongs to the NrdR family. Zn(2+) serves as cofactor.

Negatively regulates transcription of bacterial ribonucleotide reductase nrd genes and operons by binding to NrdR-boxes. The polypeptide is Transcriptional repressor NrdR (Streptomyces griseus subsp. griseus (strain JCM 4626 / CBS 651.72 / NBRC 13350 / KCC S-0626 / ISP 5235)).